The chain runs to 463 residues: V-type ATP synthase beta chain (463 aa).

This sequence belongs to the ATPase alpha/beta chains family.

Its function is as follows. Produces ATP from ADP in the presence of a proton gradient across the membrane. The V-type beta chain is a regulatory subunit. The polypeptide is V-type ATP synthase beta chain (Halothermothrix orenii (strain H 168 / OCM 544 / DSM 9562)).